Here is a 396-residue protein sequence, read N- to C-terminus: Elongation factor Tu (396 aa).

The tr-type G domain maps to 10–206 (KPHVNVGTIG…ALDSYIPTPK (197 aa)). Residues 19–26 (GHVDHGKT) are G1. 19 to 26 (GHVDHGKT) is a GTP binding site. Thr26 provides a ligand contact to Mg(2+). The segment at 60–64 (GITIS) is G2. The tract at residues 81-84 (DCPG) is G3. Residues 81–85 (DCPGH) and 136–139 (NKAD) each bind GTP. A G4 region spans residues 136–139 (NKAD). The G5 stretch occupies residues 174 to 176 (SAL).

Belongs to the TRAFAC class translation factor GTPase superfamily. Classic translation factor GTPase family. EF-Tu/EF-1A subfamily. Monomer.

Its subcellular location is the cytoplasm. The catalysed reaction is GTP + H2O = GDP + phosphate + H(+). GTP hydrolase that promotes the GTP-dependent binding of aminoacyl-tRNA to the A-site of ribosomes during protein biosynthesis. In Vesicomyosocius okutanii subsp. Calyptogena okutanii (strain HA), this protein is Elongation factor Tu.